The following is a 270-amino-acid chain: Type II restriction enzyme CeqI (270 aa).

The enzyme catalyses Endonucleolytic cleavage of DNA to give specific double-stranded fragments with terminal 5'-phosphates.. A P subtype restriction enzyme that recognizes the double-stranded sequence 5'-GATATC-3' and cleaves after T-3. This is Type II restriction enzyme CeqI (ceqIR) from Rhodococcus hoagii (Corynebacterium equii).